A 483-amino-acid polypeptide reads, in one-letter code: Keratin, type II cytoskeletal 7 (483 aa).

Residue Ser-2 is modified to N-acetylserine. 3 positions are modified to phosphoserine: Ser-2, Ser-6, and Ser-7. The tract at residues 2–107 (SVQFSSQTFS…DPQIQQVRKE (106 aa)) is head. Ser-12 carries an O-linked (GlcNAc) serine glycan. The tract at residues 14 to 37 (SAAFPRRGGQGRLSSVSSRAGSVS) is disordered. A Dimethylated arginine; alternate modification is found at Arg-20. An Omega-N-methylarginine; alternate modification is found at Arg-20. Residues 25–37 (RLSSVSSRAGSVS) are compositionally biased toward low complexity. A phosphoserine mark is found at Ser-63 and Ser-88. The coil 1A stretch occupies residues 107–143 (EEREQIKTLNNKFASFIDKVRFLEQQNQMLETKWRLL). One can recognise an IF rod domain in the interval 108 to 420 (EREQIKTLNN…KLLEGEESRL (313 aa)). A Phosphothreonine modification is found at Thr-114. Positions 144–161 (QEQKSSKGSSLPAIFEAH) are linker 1. Lys-147 participates in a covalent cross-link: Glycyl lysine isopeptide (Lys-Gly) (interchain with G-Cter in SUMO2). The tract at residues 162 to 253 (IANLRRQLDG…TLYEMELNEL (92 aa)) is coil 1B. Lys-196 carries the post-translational modification N6-acetyllysine. The interval 254–277 (QTQISDTSVVLSMDNSRSLDLDSI) is linker 12. 2 positions are modified to phosphoserine: Ser-269 and Ser-271. The interval 278-416 (ISEVKAQYED…ATYRKLLEGE (139 aa)) is coil 2. Residues Lys-282 and Lys-303 each participate in a glycyl lysine isopeptide (Lys-Gly) (interchain with G-Cter in SUMO2) cross-link. Thr-306 carries the post-translational modification Phosphothreonine. Residues Lys-313 and Lys-348 each participate in a glycyl lysine isopeptide (Lys-Gly) (interchain with G-Cter in SUMO2) cross-link. The tail stretch occupies residues 417–483 (ESRLSGDGVG…TSSSRRSVRN (67 aa)).

Belongs to the intermediate filament family. In terms of assembly, heterotetramer of two type I and two type II keratins. Interacts with eukaryotic translation initiator factor 3 (eIF3) subunit EIF3S10. Interacts with GPER1. Post-translationally, arg-20 is dimethylated, probably to asymmetric dimethylarginine.

In terms of biological role, blocks interferon-dependent interphase and stimulates DNA synthesis in cells. This is Keratin, type II cytoskeletal 7 from Potorous tridactylus (Potoroo).